Consider the following 330-residue polypeptide: Syntaxin-121 (330 aa).

Residues 1–10 show a composition bias toward polar residues; it reads MNNLFSSSWK. Residues 1–39 form a disordered region; sequence MNNLFSSSWKRTGGGGGGDGDIESGGGVEMAPPPGAAAG. The Cytoplasmic segment spans residues 1–284; that stretch reads MNNLFSSSWK…RKHQKSTRKW (284 aa). The span at 12–28 shows a compositional bias: gly residues; it reads TGGGGGGDGDIESGGGV. Residues 212–274 enclose the t-SNARE coiled-coil homology domain; the sequence is VAEIQERHGA…DRGREQLVVA (63 aa). A helical; Anchor for type IV membrane protein membrane pass occupies residues 285-305; it reads TCIAIIILLVLILVVVLPIVL. At 306 to 330 the chain is on the vesicular side; sequence KFVNNNKSSSSSPAPATPSPPPPTA. A disordered region spans residues 311–330; it reads NKSSSSSPAPATPSPPPPTA. Pro residues predominate over residues 320–330; it reads PATPSPPPPTA.

The protein belongs to the syntaxin family. In terms of assembly, interacts with SNAP32. Expressed in roots, stems, leaf blades and leaf sheaths.

It localises to the cell membrane. Vesicle trafficking protein that functions in the secretory pathway. Involved in plant defense by mediating host resistance to the rice blast fungus Magnaporthe oryzae. The interaction with SNAP32 may contribute to host resistance to the rice blast fungus. The protein is Syntaxin-121 of Oryza sativa subsp. japonica (Rice).